Reading from the N-terminus, the 365-residue chain is MKKQRIVIKIGSSSLTNSKGSIDEEKINDHVRAIAALKKEGHEVIFISSGAVAAGFLQLGYPARPVTLKGKQAAAAVGQSLLMQTYIEHFADHDIKPAQILLTRNDFAKRERYRNAYATVMELIERGLVPIINENDSVSVEELTFGDNDMLSALVSGLIHADKLIILTDINGLYDSNPAEHPDARRFDYIPEITDELLGCAASAGSKVGTGGMKSKLLAAKTALSLGVNVFIGAGEGDDKLIQILKGNGDGTYIGQSDLSSVNNHRQWIAFHSPVSGKITVDEGAELAITENGGSLLPAGVTAISGDFPKGAVVEVYGPNGLAGKGQTLYSAAELEEVKGKRSDEFHHEEGIEVIHRNDWVSIKE.

Lys-9 is a binding site for ATP. The substrate site is built by Ser-49, Asp-136, and Asn-148. Residues 168–169 (TD) and 210–216 (TGGMKSK) contribute to the ATP site. The 78-residue stretch at 276–353 (SGKITVDEGA…DEFHHEEGIE (78 aa)) folds into the PUA domain.

This sequence belongs to the glutamate 5-kinase family.

The protein localises to the cytoplasm. The catalysed reaction is L-glutamate + ATP = L-glutamyl 5-phosphate + ADP. The protein operates within amino-acid biosynthesis; L-proline biosynthesis; L-glutamate 5-semialdehyde from L-glutamate: step 1/2. Catalyzes the transfer of a phosphate group to glutamate to form L-glutamate 5-phosphate. The polypeptide is Glutamate 5-kinase 1 (Bacillus licheniformis (strain ATCC 14580 / DSM 13 / JCM 2505 / CCUG 7422 / NBRC 12200 / NCIMB 9375 / NCTC 10341 / NRRL NRS-1264 / Gibson 46)).